We begin with the raw amino-acid sequence, 880 residues long: Translation initiation factor IF-2 (880 aa).

The segment at 1–251 (MVDTKNPGDK…PTAKPAPAKQ (251 aa)) is disordered. Over residues 58–79 (PADAPAAPAPVAAAKPAPVRAP) the composition is skewed to low complexity. Residues 115–183 (ARIRDEEERK…KRFGEEEAKK (69 aa)) are compositionally biased toward basic and acidic residues. 2 stretches are compositionally biased toward low complexity: residues 184 to 215 (AAAA…VAAD) and 233 to 250 (AARP…APAK). The tr-type G domain maps to 376-547 (PRSPVVTVMG…ALQAELLDLK (172 aa)). The G1 stretch occupies residues 385 to 392 (GHVDHGKT). 385-392 (GHVDHGKT) lines the GTP pocket. A G2 region spans residues 410–414 (GITQH). The G3 stretch occupies residues 433-436 (DTPG). Residues 433–437 (DTPGH) and 487–490 (NKID) each bind GTP. Positions 487–490 (NKID) are G4. The tract at residues 523-525 (SAK) is G5.

It belongs to the TRAFAC class translation factor GTPase superfamily. Classic translation factor GTPase family. IF-2 subfamily.

The protein localises to the cytoplasm. Functionally, one of the essential components for the initiation of protein synthesis. Protects formylmethionyl-tRNA from spontaneous hydrolysis and promotes its binding to the 30S ribosomal subunits. Also involved in the hydrolysis of GTP during the formation of the 70S ribosomal complex. The protein is Translation initiation factor IF-2 of Rhodopseudomonas palustris (strain BisB18).